A 666-amino-acid chain; its full sequence is Putative cysteine-rich receptor-like protein kinase 20 (666 aa).

A signal peptide spans 1-23 (MSSLICFIFLFLFSFITSFTASA). Topologically, residues 24 to 264 (QNPFYLYHNC…PRPGKGGNSS (241 aa)) are extracellular. Gnk2-homologous domains are found at residues 27–131 (FYLY…NRNI) and 137–241 (TDGG…NYEF). 5 N-linked (GlcNAc...) asparagine glycosylation sites follow: N32, N42, N60, N69, and N103. The N-linked (GlcNAc...) asparagine glycan is linked to N262. Residues 265 to 285 (VIVIAVVVPITVLFLLFVAFF) traverse the membrane as a helical segment. Residues 286–666 (SVRRAKRKKT…EASITSVAPR (381 aa)) are Cytoplasmic-facing. The Protein kinase domain maps to 344–623 (FLPINKLGQG…QMLTTSSIAL (280 aa)). ATP is bound by residues 350 to 358 (LGQGGFGEV) and K372. Y417 bears the Phosphotyrosine mark. Catalysis depends on D469, which acts as the Proton acceptor. Phosphothreonine is present on T509. Y517 carries the post-translational modification Phosphotyrosine.

Belongs to the protein kinase superfamily. Ser/Thr protein kinase family. CRK subfamily.

Its subcellular location is the membrane. It carries out the reaction L-seryl-[protein] + ATP = O-phospho-L-seryl-[protein] + ADP + H(+). The catalysed reaction is L-threonyl-[protein] + ATP = O-phospho-L-threonyl-[protein] + ADP + H(+). The protein is Putative cysteine-rich receptor-like protein kinase 20 (CRK20) of Arabidopsis thaliana (Mouse-ear cress).